We begin with the raw amino-acid sequence, 1068 residues long: Rho family-interacting cell polarization regulator 2 (1068 aa).

Serine 21 and serine 37 each carry phosphoserine; in isoform. Positions 45–73 (LKKPQAKLKKMHNLGHKNNNPPKEPQPKR) are disordered. Residues 48–59 (PQAKLKKMHNLG) show a composition bias toward basic residues. Residues 55–113 (MHNLGHKNNNPPKEPQPKRVEEVYRALKNGLDEYLEVHQTELDKLTAQLKDMKRNSRLG) form an involved in cell filopodia formation region. A coiled-coil region spans residues 83–112 (NGLDEYLEVHQTELDKLTAQLKDMKRNSRL). Serine 341 is modified (phosphoserine; in isoform 2). Positions 474–491 (QNEGMDDTSSASSRNSLG) are enriched in polar residues. The segment at 474–524 (QNEGMDDTSSASSRNSLGEGQEPKSHLKEEDPEEPRKPASAPSEACRRQSS) is disordered. Over residues 494 to 510 (QEPKSHLKEEDPEEPRK) the composition is skewed to basic and acidic residues. Serine 523 carries the post-translational modification Phosphoserine; in isoform 2. Residue serine 573 is modified to Phosphoserine. The residue at position 585 (serine 585) is a Phosphoserine; in isoform 2. A coiled-coil region spans residues 768–793 (VARSLLEKLSRQIQVMEKLAAVSDEN).

This sequence belongs to the RIPOR family. Homooligomer; homooligomerization is regulated by RHOC and leads to the formation of concatemers through the association of N- and C-termini. Interacts with 14-3-3 proteins; these interactions occur during myogenic cell differentiation. Interacts with HDAC6; this interaction occurs during early myogenic differentiation and prevents HDAC6 to deacetylate tubulin. Interacts with DYSF; this interaction occurs during early myogenic differentiation. Interacts with MYOF. Interacts with RHOC. Isoform 1 and isoform 2 interact (via active GTP- or inactive GDP-bound forms) with RHOA; these interactions are direct, block the loading of GTP to RHOA and decrease upon chemokine CCL19 stimulation in primary T lymphocytes. Isoform 2 interacts (phosphorylated form) with HDAC6; this interaction induces T cell proliferation arrest. Isoform 2 interacts (phosphorylated form) with 14-3-3 proteins; these interactions induces T cell proliferation arrest. Isoform 2 interacts with 14-3-3 proteins. Isoform 2 interacts (via phosphorylated form) with YWHAB; this interaction occurs in a chemokine-dependent manner and does not compete for binding of RIPOR2 with RHOA nor blocks inhibition of RIPOR2-mediated RHOA activity. Isoform 2 interacts with YWHAE. Isoform 2 interacts with YWHAQ. In terms of processing, phosphorylated. Isoform 2 is phosphorylated in T cells. Chemokine-induced phosphorylation of isoform 2 in neutrophils occurs in a PKC- and AKT-dependent manner, resulting in RIPOR2 interaction with YWHAB and stabilization. Isoform 2 is phosphorylated by PKCA, AKT1 and MAPKAPK1A; in vitro. Acetylated during myogenic differentiation. As to expression, expressed in primary fetal mononuclear myoblast. Expressed strongly in naive T lymphocytes. Expressed weakly in activated T lymphocytes (at protein level). Expressed in blood cells and adult tissues of hematopoietic origin, such as the secondary lymphoid organs. Expressed in cytotrophoblast.

The protein resides in the cytoplasm. Its subcellular location is the cytoskeleton. The protein localises to the cell projection. It is found in the filopodium. It localises to the stereocilium. The protein resides in the stereocilium membrane. Its subcellular location is the apical cell membrane. Its function is as follows. Acts as an inhibitor of the small GTPase RHOA and plays several roles in the regulation of myoblast and hair cell differentiation, lymphocyte T proliferation and neutrophil polarization. Inhibits chemokine-induced T lymphocyte responses, such as cell adhesion, polarization and migration. Involved also in the regulation of neutrophil polarization, chemotaxis and adhesion. Required for normal development of inner and outer hair cell stereocilia within the cochlea of the inner ear. Plays a role for maintaining the structural organization of the basal domain of stereocilia. Involved in mechanosensory hair cell function. Required for normal hearing. Acts as an inhibitor of the small GTPase RHOA. Plays a role in fetal mononuclear myoblast differentiation by promoting filopodia and myotube formation. Maintains naive T lymphocytes in a quiescent state. This Homo sapiens (Human) protein is Rho family-interacting cell polarization regulator 2 (RIPOR2).